The chain runs to 307 residues: Porphobilinogen deaminase (307 aa).

Cys-241 is modified (S-(dipyrrolylmethanemethyl)cysteine).

The protein belongs to the HMBS family. In terms of assembly, monomer. It depends on dipyrromethane as a cofactor.

The catalysed reaction is 4 porphobilinogen + H2O = hydroxymethylbilane + 4 NH4(+). It participates in porphyrin-containing compound metabolism; protoporphyrin-IX biosynthesis; coproporphyrinogen-III from 5-aminolevulinate: step 2/4. Its function is as follows. Tetrapolymerization of the monopyrrole PBG into the hydroxymethylbilane pre-uroporphyrinogen in several discrete steps. In Coxiella burnetii (strain CbuK_Q154) (Coxiella burnetii (strain Q154)), this protein is Porphobilinogen deaminase.